Consider the following 349-residue polypeptide: tRNA pseudouridine synthase D (349 aa).

Position 26 (phenylalanine 26) interacts with substrate. The active-site Nucleophile is the aspartate 79. Asparagine 128 contacts substrate. In terms of domain architecture, TRUD spans 154-302 (GVPNYFGEQR…VEGCRRAILV (149 aa)). Substrate is bound at residue phenylalanine 328.

The protein belongs to the pseudouridine synthase TruD family.

The enzyme catalyses uridine(13) in tRNA = pseudouridine(13) in tRNA. In terms of biological role, responsible for synthesis of pseudouridine from uracil-13 in transfer RNAs. This chain is tRNA pseudouridine synthase D, found in Photorhabdus laumondii subsp. laumondii (strain DSM 15139 / CIP 105565 / TT01) (Photorhabdus luminescens subsp. laumondii).